The primary structure comprises 109 residues: Nucleoid-associated protein MS1507 (109 aa).

A disordered region spans residues 1 to 21; the sequence is MFGKGGLGNLMKQAQQMQERM.

Belongs to the YbaB/EbfC family. Homodimer.

The protein localises to the cytoplasm. It localises to the nucleoid. Functionally, binds to DNA and alters its conformation. May be involved in regulation of gene expression, nucleoid organization and DNA protection. The chain is Nucleoid-associated protein MS1507 from Mannheimia succiniciproducens (strain KCTC 0769BP / MBEL55E).